The following is a 210-amino-acid chain: Prolactin-2 (210 aa).

Positions 1–23 are cleaved as a signal peptide; it reads MARRSQGTKLHLAVLCLVVSCHA. 2 disulfide bridges follow: Cys-69-Cys-183 and Cys-200-Cys-210.

It belongs to the somatotropin/prolactin family.

Its subcellular location is the secreted. This is Prolactin-2 (prl2) from Oncorhynchus keta (Chum salmon).